Consider the following 63-residue polypeptide: Cytochrome c oxidase subunit 7C, mitochondrial (63 aa).

The transit peptide at 1 to 16 (MLGQSIRRFTTSVVRR) directs the protein to the mitochondrion. At 17-34 (SHYEEGPGKNLPFSVENK) the chain is on the mitochondrial matrix side. The residue at position 25 (Lys25) is an N6-acetyllysine; alternate. An N6-succinyllysine; alternate modification is found at Lys25. A helical membrane pass occupies residues 35–57 (WRLLAMMTVYFGSGFAAPFFIVR). The Mitochondrial intermembrane segment spans residues 58–63 (HQLLKK).

This sequence belongs to the cytochrome c oxidase VIIc family. Component of the cytochrome c oxidase (complex IV, CIV), a multisubunit enzyme composed of 14 subunits. The complex is composed of a catalytic core of 3 subunits MT-CO1, MT-CO2 and MT-CO3, encoded in the mitochondrial DNA, and 11 supernumerary subunits COX4I, COX5A, COX5B, COX6A, COX6B, COX6C, COX7A, COX7B, COX7C, COX8 and NDUFA4, which are encoded in the nuclear genome. The complex exists as a monomer or a dimer and forms supercomplexes (SCs) in the inner mitochondrial membrane with NADH-ubiquinone oxidoreductase (complex I, CI) and ubiquinol-cytochrome c oxidoreductase (cytochrome b-c1 complex, complex III, CIII), resulting in different assemblies (supercomplex SCI(1)III(2)IV(1) and megacomplex MCI(2)III(2)IV(2)). Interacts with RAB5IF.

It is found in the mitochondrion inner membrane. Its pathway is energy metabolism; oxidative phosphorylation. Functionally, component of the cytochrome c oxidase, the last enzyme in the mitochondrial electron transport chain which drives oxidative phosphorylation. The respiratory chain contains 3 multisubunit complexes succinate dehydrogenase (complex II, CII), ubiquinol-cytochrome c oxidoreductase (cytochrome b-c1 complex, complex III, CIII) and cytochrome c oxidase (complex IV, CIV), that cooperate to transfer electrons derived from NADH and succinate to molecular oxygen, creating an electrochemical gradient over the inner membrane that drives transmembrane transport and the ATP synthase. Cytochrome c oxidase is the component of the respiratory chain that catalyzes the reduction of oxygen to water. Electrons originating from reduced cytochrome c in the intermembrane space (IMS) are transferred via the dinuclear copper A center (CU(A)) of subunit 2 and heme A of subunit 1 to the active site in subunit 1, a binuclear center (BNC) formed by heme A3 and copper B (CU(B)). The BNC reduces molecular oxygen to 2 water molecules using 4 electrons from cytochrome c in the IMS and 4 protons from the mitochondrial matrix. The protein is Cytochrome c oxidase subunit 7C, mitochondrial (Cox7c) of Mus musculus (Mouse).